The chain runs to 198 residues: Ribonuclease HII (198 aa).

The RNase H type-2 domain occupies 10-198 (QLVAGVDEVG…PVKRALGLAS (189 aa)). The a divalent metal cation site is built by Asp16, Glu17, and Asp108.

It belongs to the RNase HII family. It depends on Mn(2+) as a cofactor. Requires Mg(2+) as cofactor.

It is found in the cytoplasm. It carries out the reaction Endonucleolytic cleavage to 5'-phosphomonoester.. Endonuclease that specifically degrades the RNA of RNA-DNA hybrids. The protein is Ribonuclease HII of Escherichia coli O6:H1 (strain CFT073 / ATCC 700928 / UPEC).